We begin with the raw amino-acid sequence, 182 residues long: Adenine phosphoribosyltransferase (182 aa).

It belongs to the purine/pyrimidine phosphoribosyltransferase family. Homodimer.

It is found in the cytoplasm. The enzyme catalyses AMP + diphosphate = 5-phospho-alpha-D-ribose 1-diphosphate + adenine. The protein operates within purine metabolism; AMP biosynthesis via salvage pathway; AMP from adenine: step 1/1. Functionally, catalyzes a salvage reaction resulting in the formation of AMP, that is energically less costly than de novo synthesis. This chain is Adenine phosphoribosyltransferase, found in Pseudomonas syringae pv. tomato (strain ATCC BAA-871 / DC3000).